A 256-amino-acid polypeptide reads, in one-letter code: Transcription factor BHLH094 (256 aa).

Positions 1–125 (MDPAPSLAAE…TPPEPPKQDY (125 aa)) are disordered. Residues 79–97 (PEAKRLKPMKSSDKNDSLR) show a composition bias toward basic and acidic residues. The segment at 134-147 (QATDSHSLAERARR) is basic motif; degenerate. The bHLH domain occupies 134-184 (QATDSHSLAERARREKISERMKILQDLVPGCNKVIGKASVLDEIINYIQSL). The segment at 148 to 184 (EKISERMKILQDLVPGCNKVIGKASVLDEIINYIQSL) is helix-loop-helix motif.

It belongs to the bHLH protein family. Interacts with RSS3. Forms a ternary complex with RSS3 and TIFY11A/JAZ9 in the nucleus.

It localises to the nucleus. Its function is as follows. Transcription factor that forms a ternary complex with RSS3 and TIFY11A/JAZ9 to negatively regulate jasmonate-responsive genes. The protein is Transcription factor BHLH094 of Oryza sativa subsp. japonica (Rice).